We begin with the raw amino-acid sequence, 255 residues long: 3-deoxy-manno-octulosonate cytidylyltransferase (255 aa).

This sequence belongs to the KdsB family.

It is found in the cytoplasm. The enzyme catalyses 3-deoxy-alpha-D-manno-oct-2-ulosonate + CTP = CMP-3-deoxy-beta-D-manno-octulosonate + diphosphate. It functions in the pathway nucleotide-sugar biosynthesis; CMP-3-deoxy-D-manno-octulosonate biosynthesis; CMP-3-deoxy-D-manno-octulosonate from 3-deoxy-D-manno-octulosonate and CTP: step 1/1. The protein operates within bacterial outer membrane biogenesis; lipopolysaccharide biosynthesis. Activates KDO (a required 8-carbon sugar) for incorporation into bacterial lipopolysaccharide in Gram-negative bacteria. The sequence is that of 3-deoxy-manno-octulosonate cytidylyltransferase from Glaesserella parasuis serovar 5 (strain SH0165) (Haemophilus parasuis).